The chain runs to 470 residues: Uronate isomerase (470 aa).

Belongs to the metallo-dependent hydrolases superfamily. Uronate isomerase family.

It catalyses the reaction D-glucuronate = D-fructuronate. It carries out the reaction aldehydo-D-galacturonate = keto-D-tagaturonate. The protein operates within carbohydrate metabolism; pentose and glucuronate interconversion. The chain is Uronate isomerase from Serratia proteamaculans (strain 568).